A 66-amino-acid chain; its full sequence is Beta-toxin Cbo3 (66 aa).

The 66-residue stretch at 1-66 folds into the LCN-type CS-alpha/beta domain; it reads KEGYIVNYHD…VWPLPKKTCN (66 aa). 4 cysteine pairs are disulfide-bonded: Cys-12-Cys-65, Cys-16-Cys-41, Cys-25-Cys-46, and Cys-29-Cys-48. Position 66 is an asparagine amide (Asn-66).

Belongs to the long (4 C-C) scorpion toxin superfamily. Sodium channel inhibitor family. Beta subfamily. As to expression, expressed by the venom gland.

Its subcellular location is the secreted. Its function is as follows. Beta toxins bind voltage-independently at site-4 of sodium channels and shift the voltage of activation toward more negative potentials thereby affecting sodium channel activation and promoting spontaneous and repetitive firing. A mixture of Cbo2 and Cbo3 is weakly active on the human voltage-gated sodium channels Nav1.4/SCN4A and Nav1.6/SCN8A when tested at 200 nM. In vivo, is toxic to mice when intraperitoneally injected. The polypeptide is Beta-toxin Cbo3 (Centruroides bonito (Scorpion)).